The primary structure comprises 306 residues: uncharacterized protein (306 aa).

Positions 287-306 (DEEGKSEDAKRQEEEKKKSS) are disordered.

This sequence belongs to the aldo/keto reductase family.

Its subcellular location is the cytoplasm. The protein resides in the nucleus. This is an uncharacterized protein from Schizosaccharomyces pombe (strain 972 / ATCC 24843) (Fission yeast).